A 354-amino-acid chain; its full sequence is Probable cinnamyl alcohol dehydrogenase 5 (354 aa).

Cysteine 43 lines the Zn(2+) pocket. Serine 45 contacts NADP(+). 7 residues coordinate Zn(2+): histidine 65, glutamate 66, cysteine 96, cysteine 99, cysteine 102, cysteine 110, and cysteine 159. NADP(+) contacts are provided by residues threonine 163, 184–189, 207–212, threonine 247, glycine 271, and 294–296; these read GLGGLG, SSSPGK, and SCI.

Belongs to the zinc-containing alcohol dehydrogenase family. Homodimer. The cofactor is Zn(2+).

The catalysed reaction is (E)-cinnamyl alcohol + NADP(+) = (E)-cinnamaldehyde + NADPH + H(+). It catalyses the reaction (E)-coniferol + NADP(+) = (E)-coniferaldehyde + NADPH + H(+). The enzyme catalyses (E)-sinapyl alcohol + NADP(+) = (E)-sinapaldehyde + NADPH + H(+). It carries out the reaction (E)-4-coumaroyl alcohol + NADP(+) = (E)-4-coumaraldehyde + NADPH + H(+). The catalysed reaction is (E)-caffeyl alcohol + NADP(+) = (E)-caffeyl aldehyde + NADPH + H(+). Its pathway is aromatic compound metabolism; phenylpropanoid biosynthesis. Its function is as follows. Involved in lignin biosynthesis. Catalyzes the final step specific for the production of lignin monomers. Catalyzes the NADPH-dependent reduction of coniferaldehyde, 5-hydroxyconiferaldehyde, sinapaldehyde, 4-coumaraldehyde and caffeyl aldehyde to their respective alcohols. This is Probable cinnamyl alcohol dehydrogenase 5 from Oryza sativa subsp. japonica (Rice).